Consider the following 501-residue polypeptide: Serine/threonine protein phosphatase 2A 55 kDa regulatory subunit B beta isoform (501 aa).

Met1 carries the post-translational modification N-acetylmethionine. WD repeat units follow at residues 34-73, 110-151, 220-258, 269-309, and 328-366; these read QEVDIISAIEFDKSGDHLATGDRGGRVVLFERTDTKDHGG, EIEE…IKKI, AHDYHINSISNSSDGETFISADDLRVNLWNLEISNQSFN, DLTE…LCDS, and EIIASISDIKFSKDGRYILSRDYMTLKLWDINMDSGPVA. Polar residues predominate over residues 439–449; it reads TPARPSRSIGS. Residues 439–466 form a disordered region; it reads TPARPSRSIGSMTRVVRRGSESPGTEAN. One copy of the WD 6 repeat lies at 471-501; it reads DFTTKLLHMAWHPTENSIACAAANSLYMYYA.

This sequence belongs to the phosphatase 2A regulatory subunit B family. PP2A consists of a common heteromeric enzyme, composed of a catalytic subunit (subunits C), a constant regulatory subunit (subunit A), and a variety of regulatory subunits such as subunits B (the R2/B/PR55/B55, R3/B''/PR72/PR130/PR59 and R5/B'/B56 families). Interacts with SIC/RON3. Expressed ubiquitously.

In terms of biological role, the B regulatory subunit may modulate substrate selectivity and catalytic activity, and may also direct the localization of the catalytic enzyme to a particular subcellular compartment. The protein is Serine/threonine protein phosphatase 2A 55 kDa regulatory subunit B beta isoform (PP2AB2) of Arabidopsis thaliana (Mouse-ear cress).